A 121-amino-acid polypeptide reads, in one-letter code: Ribonuclease P protein component (121 aa).

This sequence belongs to the RnpA family. In terms of assembly, consists of a catalytic RNA component (M1 or rnpB) and a protein subunit.

The catalysed reaction is Endonucleolytic cleavage of RNA, removing 5'-extranucleotides from tRNA precursor.. RNaseP catalyzes the removal of the 5'-leader sequence from pre-tRNA to produce the mature 5'-terminus. It can also cleave other RNA substrates such as 4.5S RNA. The protein component plays an auxiliary but essential role in vivo by binding to the 5'-leader sequence and broadening the substrate specificity of the ribozyme. The chain is Ribonuclease P protein component from Nitrosomonas eutropha (strain DSM 101675 / C91 / Nm57).